The sequence spans 605 residues: Aspartate--tRNA(Asp/Asn) ligase (605 aa).

L-aspartate is bound at residue Glu-183. The interval 207-210 is aspartate; sequence QLFK. Arg-229 serves as a coordination point for L-aspartate. Residues 229-231 and Gln-238 contribute to the ATP site; that span reads RDE. His-457 contributes to the L-aspartate binding site. Glu-497 serves as a coordination point for ATP. Arg-504 contacts L-aspartate. Residue 549–552 coordinates ATP; sequence GLDR.

The protein belongs to the class-II aminoacyl-tRNA synthetase family. Type 1 subfamily. Homodimer.

The protein resides in the cytoplasm. It carries out the reaction tRNA(Asx) + L-aspartate + ATP = L-aspartyl-tRNA(Asx) + AMP + diphosphate. Its function is as follows. Aspartyl-tRNA synthetase with relaxed tRNA specificity since it is able to aspartylate not only its cognate tRNA(Asp) but also tRNA(Asn). Reaction proceeds in two steps: L-aspartate is first activated by ATP to form Asp-AMP and then transferred to the acceptor end of tRNA(Asp/Asn). In Persephonella marina (strain DSM 14350 / EX-H1), this protein is Aspartate--tRNA(Asp/Asn) ligase.